The primary structure comprises 497 residues: Probable cytosol aminopeptidase (497 aa).

Residues K267 and D272 each contribute to the Mn(2+) site. K279 is a catalytic residue. Mn(2+) contacts are provided by D290, D349, and E351. R353 is a catalytic residue.

The protein belongs to the peptidase M17 family. Mn(2+) serves as cofactor.

The protein resides in the cytoplasm. It carries out the reaction Release of an N-terminal amino acid, Xaa-|-Yaa-, in which Xaa is preferably Leu, but may be other amino acids including Pro although not Arg or Lys, and Yaa may be Pro. Amino acid amides and methyl esters are also readily hydrolyzed, but rates on arylamides are exceedingly low.. The enzyme catalyses Release of an N-terminal amino acid, preferentially leucine, but not glutamic or aspartic acids.. Presumably involved in the processing and regular turnover of intracellular proteins. Catalyzes the removal of unsubstituted N-terminal amino acids from various peptides. In Nitrosomonas europaea (strain ATCC 19718 / CIP 103999 / KCTC 2705 / NBRC 14298), this protein is Probable cytosol aminopeptidase.